A 283-amino-acid polypeptide reads, in one-letter code: Pantothenate synthetase (283 aa).

Residue 30-37 (MGNLHAGH) participates in ATP binding. Catalysis depends on His37, which acts as the Proton donor. Residue Gln61 participates in (R)-pantoate binding. Beta-alanine is bound at residue Gln61. Residue 149–152 (GEKD) coordinates ATP. A (R)-pantoate-binding site is contributed by Gln155. Residues Leu178 and 186–189 (MSSR) contribute to the ATP site.

It belongs to the pantothenate synthetase family. In terms of assembly, homodimer.

The protein localises to the cytoplasm. The catalysed reaction is (R)-pantoate + beta-alanine + ATP = (R)-pantothenate + AMP + diphosphate + H(+). Its pathway is cofactor biosynthesis; (R)-pantothenate biosynthesis; (R)-pantothenate from (R)-pantoate and beta-alanine: step 1/1. Catalyzes the condensation of pantoate with beta-alanine in an ATP-dependent reaction via a pantoyl-adenylate intermediate. This chain is Pantothenate synthetase, found in Hahella chejuensis (strain KCTC 2396).